Consider the following 269-residue polypeptide: tRNA pseudouridine synthase A (269 aa).

D51 (nucleophile) is an active-site residue. Y109 lines the substrate pocket.

This sequence belongs to the tRNA pseudouridine synthase TruA family. As to quaternary structure, homodimer.

It carries out the reaction uridine(38/39/40) in tRNA = pseudouridine(38/39/40) in tRNA. In terms of biological role, formation of pseudouridine at positions 38, 39 and 40 in the anticodon stem and loop of transfer RNAs. This Aeromonas hydrophila subsp. hydrophila (strain ATCC 7966 / DSM 30187 / BCRC 13018 / CCUG 14551 / JCM 1027 / KCTC 2358 / NCIMB 9240 / NCTC 8049) protein is tRNA pseudouridine synthase A.